The primary structure comprises 76 residues: DNA gyrase inhibitor YacG (76 aa).

Zn(2+) is bound by residues Cys-7, Cys-10, Cys-26, and Cys-30.

It belongs to the DNA gyrase inhibitor YacG family. As to quaternary structure, interacts with GyrB. Requires Zn(2+) as cofactor.

Its function is as follows. Inhibits all the catalytic activities of DNA gyrase by preventing its interaction with DNA. Acts by binding directly to the C-terminal domain of GyrB, which probably disrupts DNA binding by the gyrase. This is DNA gyrase inhibitor YacG from Pseudoalteromonas translucida (strain TAC 125).